The primary structure comprises 263 residues: Endonuclease 8 (263 aa).

The Schiff-base intermediate with DNA role is filled by Pro2. Glu3 acts as the Proton donor in catalysis. Lys53 (proton donor; for beta-elimination activity) is an active-site residue. The DNA site is built by Gln70, Arg125, and Asn169. An FPG-type zinc finger spans residues 229-263 (KVFHRDGELCERCGGIIEKTTLSSRPFYWCPGCQH). Catalysis depends on Arg253, which acts as the Proton donor; for delta-elimination activity.

It belongs to the FPG family. Zn(2+) serves as cofactor.

It carries out the reaction 2'-deoxyribonucleotide-(2'-deoxyribose 5'-phosphate)-2'-deoxyribonucleotide-DNA = a 3'-end 2'-deoxyribonucleotide-(2,3-dehydro-2,3-deoxyribose 5'-phosphate)-DNA + a 5'-end 5'-phospho-2'-deoxyribonucleoside-DNA + H(+). Its function is as follows. Involved in base excision repair of DNA damaged by oxidation or by mutagenic agents. Acts as a DNA glycosylase that recognizes and removes damaged bases. Has a preference for oxidized pyrimidines, such as thymine glycol, 5,6-dihydrouracil and 5,6-dihydrothymine. Has AP (apurinic/apyrimidinic) lyase activity and introduces nicks in the DNA strand. Cleaves the DNA backbone by beta-delta elimination to generate a single-strand break at the site of the removed base with both 3'- and 5'-phosphates. In Shigella dysenteriae serotype 1 (strain Sd197), this protein is Endonuclease 8.